We begin with the raw amino-acid sequence, 84 residues long: CDC42 small effector protein 2 (84 aa).

S-palmitoyl cysteine attachment occurs at residues Cys-10 and Cys-11. The CRIB domain occupies 29 to 42 (IGEPTNFAHTAHVG). Residues Ser-43 and Ser-52 each carry the phosphoserine modification.

The protein belongs to the CDC42SE/SPEC family. In terms of assembly, interacts with CDC42 (in GTP-bound form). Interacts weakly with RAC1 and not at all with RHOA.

Its subcellular location is the cytoplasm. It localises to the cytoskeleton. It is found in the cell membrane. The protein resides in the cell projection. The protein localises to the phagocytic cup. Its function is as follows. Probably involved in the organization of the actin cytoskeleton by acting downstream of CDC42, inducing actin filament assembly. Alters CDC42-induced cell shape changes. In activated T-cells, may play a role in CDC42-mediated F-actin accumulation at the immunological synapse. May play a role in early contractile events in phagocytosis in macrophages. The sequence is that of CDC42 small effector protein 2 (CDC42SE2) from Pongo abelii (Sumatran orangutan).